A 631-amino-acid chain; its full sequence is Phosphomethylpyrimidine synthase (631 aa).

Substrate is bound by residues asparagine 239, methionine 268, tyrosine 297, histidine 333, 353-355 (SRG), 394-397 (DGLR), and glutamate 433. Histidine 437 lines the Zn(2+) pocket. Tyrosine 460 contributes to the substrate binding site. A Zn(2+)-binding site is contributed by histidine 501. [4Fe-4S] cluster-binding residues include cysteine 581, cysteine 584, and cysteine 589.

It belongs to the ThiC family. Homodimer. [4Fe-4S] cluster serves as cofactor.

The catalysed reaction is 5-amino-1-(5-phospho-beta-D-ribosyl)imidazole + S-adenosyl-L-methionine = 4-amino-2-methyl-5-(phosphooxymethyl)pyrimidine + CO + 5'-deoxyadenosine + formate + L-methionine + 3 H(+). It functions in the pathway cofactor biosynthesis; thiamine diphosphate biosynthesis. Catalyzes the synthesis of the hydroxymethylpyrimidine phosphate (HMP-P) moiety of thiamine from aminoimidazole ribotide (AIR) in a radical S-adenosyl-L-methionine (SAM)-dependent reaction. The sequence is that of Phosphomethylpyrimidine synthase from Salmonella heidelberg (strain SL476).